The primary structure comprises 185 residues: MLPSAQAPSLLNPTDDFAALGNIAWLWMNSPMHRDWPVHLLARNTLAPIQLGQYILLRCNDVPVAYCSWALMDADTELSYVMAPSSLGGNAWNCGDRLWIIDWIAPFSRDDNRALRRALAERHPDSVGRSLRVRRGGDTARVKEYRGRALDAAAARAQLDRYHAELIAGLRASNGGYAPRGRGTA.

Residues histidine 33 and aspartate 102 contribute to the active site.

The protein belongs to the RTX toxin acyltransferase family. Homodimer.

The protein resides in the cytoplasm. It carries out the reaction hexadecanoyl-[ACP] + L-lysyl-[protein] = N(6)-hexadecanoyl-L-lysyl-[protein] + holo-[ACP] + H(+). The catalysed reaction is (9Z)-hexadecenoyl-[ACP] + L-lysyl-[protein] = N(6)-[(9Z)-hexadecenoyl]-L-lysyl-[protein] + holo-[ACP] + H(+). In terms of biological role, protein-lysine palmitoyltransferase that catalyzes palmitoylation of the protoxin (CyaA) at two internal lysine residues, thereby converting it to the active toxin. The polypeptide is Protein-lysine palmitoyltransferase CyaC (Bordetella bronchiseptica (strain ATCC BAA-588 / NCTC 13252 / RB50) (Alcaligenes bronchisepticus)).